Here is a 404-residue protein sequence, read N- to C-terminus: MREAPHVLGIVLAGGEGKRLYPLTADRAKPAVPFGGAYRLIDFVLSNLVNARYLRICVLTQYKSHSLDRHISQNWRLSGLAGEYITPVPAQQRLGPRWYTGSADAIYQSLNLIYDEDPDYIVVFGADHVYRMDPEQMVRFHIDSGAGVTVAGIRVPRADASAFGCIDADDAGTIRDFVEKPLEPPGTPDDPTSTFVSMGNYVFTTKVLIDAIRADADDDHSDHDMGGDIIPRLVADGMAVVYDFSNNEVPGATDRDRAYWRDVGTLDAFYDAHMDLVSVHPVFNLYNKRWPIRGESENLAPAKFVNGGSAQESVVGAGSIISAASVRNSVLSSNVVVEDGAIVEGSVIMPGARVGRDAVVRHAILDKNVVVGPGEMVGVDLDKDRERFAISAGGVVAVGKGVWI.

Alpha-D-glucose 1-phosphate contacts are provided by residues tyrosine 99, glycine 164, 179-180, and serine 197; that span reads EK.

Belongs to the bacterial/plant glucose-1-phosphate adenylyltransferase family.

The catalysed reaction is alpha-D-glucose 1-phosphate + ATP + H(+) = ADP-alpha-D-glucose + diphosphate. It functions in the pathway capsule biogenesis; capsule polysaccharide biosynthesis. The protein operates within glycan biosynthesis; glycogen biosynthesis. Its function is as follows. Involved in the biosynthesis of ADP-glucose, a building block, required in the biosynthesis of maltose-1-phosphate (M1P) and in the elongation reactions to produce linear alpha-1,4-glucans. Catalyzes the reaction between ATP and alpha-D-glucose 1-phosphate (G1P) to produce pyrophosphate and ADP-Glc. In Mycobacterium ulcerans (strain Agy99), this protein is Glucose-1-phosphate adenylyltransferase.